The sequence spans 511 residues: Xylose import ATP-binding protein XylG (511 aa).

2 ABC transporter domains span residues 6–244 and 261–506; these read LEMR…VGRE and FEAR…IGKP. 38 to 45 is an ATP binding site; sequence GENGAGKS.

This sequence belongs to the ABC transporter superfamily. Xylose importer (TC 3.A.1.2.4) family. The complex is composed of two ATP-binding proteins (XylG), two transmembrane proteins (XylH) and a solute-binding protein (XylF).

The protein resides in the cell inner membrane. It carries out the reaction D-xylose(out) + ATP + H2O = D-xylose(in) + ADP + phosphate + H(+). Its function is as follows. Part of the ABC transporter complex XylFGH involved in xylose import. Responsible for energy coupling to the transport system. The sequence is that of Xylose import ATP-binding protein XylG from Brucella suis biovar 1 (strain 1330).